The following is a 739-amino-acid chain: Xylosyl- and glucuronyltransferase LARGE2s (739 aa).

The Cytoplasmic segment spans residues 1-10; it reads MLCSWRVKLK. A helical; Signal-anchor for type II membrane protein membrane pass occupies residues 11–31; the sequence is LLLATITLAVLLSWLYLFVGS. At 32-739 the chain is on the lumenal side; that stretch reads LEYGRFLLLP…LKYLTAERNL (708 aa). The tract at residues 80–105 is disordered; it reads AEGSDGNPQWAASAEDGPPLGGERNN. N-linked (GlcNAc...) asparagine glycosylation is found at Asn105, Asn131, and Asn217. Residues 121-396 form a xylosyltransferase activity region; it reads LHVAIVCAGH…FLEYDGNLLR (276 aa). 2 residues coordinate Mn(2+): Asp225 and Asp227. An N-linked (GlcNAc...) asparagine glycan is attached at Asn255. Residues 397-739 form a glucuronyltransferase activity region; the sequence is RELFGCASLP…LKYLTAERNL (343 aa). Asp546 and Asp548 together coordinate Mn(2+).

It in the C-terminal section; belongs to the glycosyltransferase 49 family. The protein in the N-terminal section; belongs to the glycosyltransferase 8 family. Requires Mn(2+) as cofactor.

It is found in the golgi apparatus membrane. The catalysed reaction is 3-O-[beta-D-GlcA-(1-&gt;3)-beta-D-Xyl-(1-&gt;4)-Rib-ol-P-Rib-ol-P-3-beta-D-GalNAc-(1-&gt;3)-beta-D-GlcNAc-(1-&gt;4)-(O-6-P-alpha-D-Man)]-Thr-[protein] + UDP-alpha-D-xylose = 3-O-[alpha-D-Xyl-(1-&gt;3)-beta-D-GlcA-(1-&gt;4)-beta-D-Xyl-(1-&gt;4)-Rib-ol-P-Rib-ol-P-3-beta-D-GalNAc-(1-&gt;3)-beta-D-GlcNAc-(1-&gt;4)-(O-6-P-alpha-D-Man)]-Thr-[protein] + UDP + H(+). It catalyses the reaction 3-O-{(1-&gt;[3)-alpha-D-Xyl-(1-&gt;3)-beta-D-GlcA-(1-&gt;](n)-4)-beta-D-Xyl-(1-&gt;4)-Rib-ol-P-Rib-ol-P-3-beta-D-GalNAc-(1-&gt;3)-beta-D-GlcNAc-(1-&gt;4)-O-6-P-alpha-D-Man}-L-Thr-[protein] + UDP-alpha-D-glucuronate = 3-O-{beta-D-GlcA-(1-&gt;[3)-alpha-D-Xyl-(1-&gt;3)-beta-D-GlcA-(1-&gt;](n)-4)-beta-D-Xyl-(1-&gt;4)-Rib-ol-P-Rib-ol-P-3-beta-D-GalNAc-(1-&gt;3)-beta-D-GlcNAc-(1-&gt;4)-O-6-P-alpha-D-Man}-L-Thr-[protein] + UDP + H(+). It carries out the reaction 3-O-{beta-D-GlcA-(1-&gt;[3)-alpha-D-Xyl-(1-&gt;3)-beta-D-GlcA-(1-&gt;](n)-4)-beta-D-Xyl-(1-&gt;4)-Rib-ol-P-Rib-ol-P-3-beta-D-GalNAc-(1-&gt;3)-beta-D-GlcNAc-(1-&gt;4)-O-6-P-alpha-D-Man}-L-Thr-[protein] + UDP-alpha-D-xylose = 3-O-{(1-&gt;[3)-alpha-D-Xyl-(1-&gt;3)-beta-D-GlcA-(1-&gt;](n+1)-4)-beta-D-Xyl-(1-&gt;4)-Rib-ol-P-Rib-ol-P-3-beta-D-GalNAc-(1-&gt;3)-beta-D-GlcNAc-(1-&gt;4)-O-6-P-alpha-D-Man}-L-Thr-[protein] + UDP + H(+). The protein operates within protein modification; protein glycosylation. Its function is as follows. Bifunctional glycosyltransferase with both alpha-1,3-xylosyltransferase and beta-1,3-glucuronyltransferase activities involved in the maturation of alpha-dystroglycan (DAG1) by glycosylation leading to DAG1 binding to laminin G-like domain-containing extracellular proteins with high affinity and in a phosphorylated-O-mannosyl trisaccharide dependent manner. Elongates the glucuronyl-beta-1,4-xylose-beta disaccharide primer structure by adding repeating units [-3-Xylose-alpha-1,3-GlcA-beta-1-] to produce a heteropolysaccharide. Supports the maturation of DAG1 more effectively than LARGE1. In addition, can modify both heparan sulfate (HS)- and chondroitin/dermatan sulfate (CS/DS)-proteoglycans (PGs), namely GPC4, with a glycosaminoglycan (GAG)-like polysaccharide composed of xylose and glucuronic acid to confer laminin binding. In Gallus gallus (Chicken), this protein is Xylosyl- and glucuronyltransferase LARGE2s.